The following is a 390-amino-acid chain: Chorismate synthase (390 aa).

Residues Arg-39 and Arg-45 each coordinate NADP(+). Residues 132-134 (RSS), 253-254 (NA), Gly-298, 313-317 (KPIPT), and Arg-339 contribute to the FMN site.

It belongs to the chorismate synthase family. As to quaternary structure, homotetramer. The cofactor is FMNH2.

It carries out the reaction 5-O-(1-carboxyvinyl)-3-phosphoshikimate = chorismate + phosphate. It functions in the pathway metabolic intermediate biosynthesis; chorismate biosynthesis; chorismate from D-erythrose 4-phosphate and phosphoenolpyruvate: step 7/7. Functionally, catalyzes the anti-1,4-elimination of the C-3 phosphate and the C-6 proR hydrogen from 5-enolpyruvylshikimate-3-phosphate (EPSP) to yield chorismate, which is the branch point compound that serves as the starting substrate for the three terminal pathways of aromatic amino acid biosynthesis. This reaction introduces a second double bond into the aromatic ring system. The sequence is that of Chorismate synthase from Bacillus subtilis (strain 168).